Here is a 358-residue protein sequence, read N- to C-terminus: Trace amine-associated receptor 7a (358 aa).

Residues 1–47 lie on the Extracellular side of the membrane; that stretch reads MDKLVDNFLSGQSRTMSEDLLSASSPQLCYENLNGSCIRSPYSPGPR. N-linked (GlcNAc...) asparagine glycosylation is present at N34. Cystine bridges form between C37–C201 and C120–C205. A helical transmembrane segment spans residues 48 to 68; it reads LILYAVFGFGAVLAVCGNLLV. The Cytoplasmic segment spans residues 69–83; sequence MTSILHFRQLHSPAN. A helical membrane pass occupies residues 84-104; it reads FLVASLACADFLVGLTVMPFS. Residues 105–121 lie on the Extracellular side of the membrane; it reads TVRSVEGCWYFGDTYCK. A helical membrane pass occupies residues 122–143; it reads FHSCFEGSFCYSSIFHLCFISV. Topologically, residues 144 to 166 are cytoplasmic; sequence DRYIAVSDPLIYPTRFTASVSGK. Residues 167–187 traverse the membrane as a helical segment; that stretch reads CITFSWLLSIIYSFSLLYTGA. The Extracellular segment spans residues 188–212; it reads NEAGLEDLVSALTCVGGCQIAVNQS. N210 is a glycosylation site (N-linked (GlcNAc...) asparagine). Residues 213–233 traverse the membrane as a helical segment; that stretch reads WVFINFLLFLVPTLVMMTVYS. At 234–274 the chain is on the cytoplasmic side; sequence KIFLIAKQQAQNIEKMSKQTTRASESYKDRVAKRERKAAKT. A helical membrane pass occupies residues 275-295; it reads LGIAVAAFLLSWLPYFIDSII. At 296–309 the chain is on the extracellular side; it reads DAFLGFITPTYVYE. The helical transmembrane segment at 310–333 threads the bilayer; sequence ILVWIAYYNSAMNPLIYAFFYPWF. Residues 334–358 are Cytoplasmic-facing; that stretch reads RKAIKLIVTGKILRQNSSVTNLFPE.

Belongs to the G-protein coupled receptor 1 family.

The protein resides in the cell membrane. Olfactory receptor specific for N,N-dimethylalkylamines trace amines. Trace amine compounds are enriched in animal body fluids and act on trace amine-associated receptors (TAARs) to elicit both intraspecific and interspecific innate behaviors. Ligand-binding causes a conformation change that triggers signaling via G(s)-class of G alpha proteins (GNAL or GNAS). The sequence is that of Trace amine-associated receptor 7a from Rattus norvegicus (Rat).